A 234-amino-acid chain; its full sequence is Venom allergen 3 (234 aa).

Residues 1 to 22 (MELIVSILWLAITAENLANTLA) form the signal peptide. 4 cysteine pairs are disulfide-bonded: cysteine 26/cysteine 41, cysteine 31/cysteine 125, cysteine 52/cysteine 118, and cysteine 198/cysteine 216. The 150-residue stretch at 69–218 (VNKHNELRQR…WTKHYLVCNY (150 aa)) folds into the SCP domain. Residues 80–99 (ASGKEMRGTNGPQPPAVKMP) are disordered.

Belongs to the CRISP family. Expressed by the venom gland.

It is found in the secreted. The polypeptide is Venom allergen 3 (Solenopsis invicta (Red imported fire ant)).